We begin with the raw amino-acid sequence, 317 residues long: Sulfate adenylyltransferase subunit 2 (317 aa).

Disordered regions lie at residues 1–21 and 298–317; these read MPDS…APLD and RAID…EGYF.

Belongs to the PAPS reductase family. CysD subfamily. Heterodimer composed of CysD, the smaller subunit, and CysN.

The enzyme catalyses sulfate + ATP + H(+) = adenosine 5'-phosphosulfate + diphosphate. The protein operates within sulfur metabolism; hydrogen sulfide biosynthesis; sulfite from sulfate: step 1/3. Functionally, with CysN forms the ATP sulfurylase (ATPS) that catalyzes the adenylation of sulfate producing adenosine 5'-phosphosulfate (APS) and diphosphate, the first enzymatic step in sulfur assimilation pathway. APS synthesis involves the formation of a high-energy phosphoric-sulfuric acid anhydride bond driven by GTP hydrolysis by CysN coupled to ATP hydrolysis by CysD. This chain is Sulfate adenylyltransferase subunit 2, found in Rhizobium etli (strain ATCC 51251 / DSM 11541 / JCM 21823 / NBRC 15573 / CFN 42).